Reading from the N-terminus, the 694-residue chain is Threonine--tRNA ligase (694 aa).

Residues 8 to 74 enclose the TGS domain; sequence NFVNTSVTTH…EETATFTAVP (67 aa). The segment at 273 to 579 is catalytic; sequence DHRRLGTELD…LLEHYAGAFP (307 aa). Zn(2+)-binding residues include Cys378, His429, and His556.

Belongs to the class-II aminoacyl-tRNA synthetase family. Homodimer. It depends on Zn(2+) as a cofactor.

It localises to the cytoplasm. The enzyme catalyses tRNA(Thr) + L-threonine + ATP = L-threonyl-tRNA(Thr) + AMP + diphosphate + H(+). Its function is as follows. Catalyzes the attachment of threonine to tRNA(Thr) in a two-step reaction: L-threonine is first activated by ATP to form Thr-AMP and then transferred to the acceptor end of tRNA(Thr). Also edits incorrectly charged L-seryl-tRNA(Thr). This Corynebacterium efficiens (strain DSM 44549 / YS-314 / AJ 12310 / JCM 11189 / NBRC 100395) protein is Threonine--tRNA ligase.